A 333-amino-acid polypeptide reads, in one-letter code: UPF0324 membrane protein WS2204 (333 aa).

The next 9 helical transmembrane spans lie at 4 to 26, 31 to 53, 59 to 81, 88 to 110, 125 to 147, 154 to 176, 218 to 240, 253 to 275, and 310 to 332; these read SIRP…FGLA, FLSL…APWY, IGII…LFGF, LLGV…FTLG, SMLI…ESLS, TAIA…PLVY, VIVK…FTIL, PWFA…PSWL, and ALAL…VKLL.

This sequence belongs to the UPF0324 family.

The protein localises to the cell membrane. The sequence is that of UPF0324 membrane protein WS2204 from Wolinella succinogenes (strain ATCC 29543 / DSM 1740 / CCUG 13145 / JCM 31913 / LMG 7466 / NCTC 11488 / FDC 602W) (Vibrio succinogenes).